A 134-amino-acid polypeptide reads, in one-letter code: Profilin-4 (134 aa).

Belongs to the profilin family. As to quaternary structure, occurs in many kinds of cells as a complex with monomeric actin in a 1:1 ratio. In terms of tissue distribution, specifically expressed in mature and germinating pollen grains, and growing pollen tubes (at protein level).

The protein localises to the cytoplasm. Its subcellular location is the cytoskeleton. Its function is as follows. Binds to actin monomers and regulates the organization of the actin cytoskeleton. At high concentrations, profilin prevents the polymerization of actin, whereas it enhances it at low concentrations. At low concentrations, associates with the poly-proline motif of formins to enhance actin filament elongation rate. Acts redundantly with PRF5 to regulate apical actin polymerization at the tip of pollen tube and control polarized pollen tube growth. Functions probably by favoring formin-mediated actin polymerization at pollen tube tips. The chain is Profilin-4 from Arabidopsis thaliana (Mouse-ear cress).